Reading from the N-terminus, the 817-residue chain is V-type proton ATPase subunit a1 (817 aa).

Topologically, residues 1 to 422 are cytoplasmic; it reads MEEFLDKLPQ…PAVYSVVTYP (422 aa). A coiled-coil region spans residues 97–133; the sequence is DIALGDLERQLADHEHEVLEMNSNSEKLRQTYNELLE. Residues 423 to 443 traverse the membrane as a helical segment; sequence FLFAVMFGDWGHGLCLLLGAL. Topologically, residues 444–468 are vacuolar; that stretch reads YLLARERKLSTQKLGSFMEMLFGGR. A helical transmembrane segment spans residues 469 to 489; that stretch reads YVILLMALFSIYCGLIYNEFF. Residues 490-547 lie on the Cytoplasmic side of the membrane; the sequence is SVPFHIFGGSAYKCRDTTCSDAYTVGLIKYRDPYPFGVDPSWRGSRTELPYLNSLKMK. A helical transmembrane segment spans residues 548 to 568; it reads MSILLGIAQMNLGLILSFFNA. Topologically, residues 569 to 580 are vacuolar; the sequence is RFFGSSLDIRYQ. Residues 581–601 traverse the membrane as a helical segment; the sequence is FIPQMIFLNSLFGYLSLLIII. Residues 602–639 lie on the Cytoplasmic side of the membrane; sequence KWCTGSQADLYHVMIYMFLSPTEELGENELFWGQRPLQ. Residues 640-660 form a helical membrane-spanning segment; that stretch reads IVLLLLAFIAVPWMLFPKPFA. Residues 661–758 lie on the Vacuolar side of the membrane; it reads LRKIHMERFQ…VLLLAWGYEN (98 aa). A helical transmembrane segment spans residues 759–779; it reads ILIRLIGVAVFAFATAFILLM. Residues 780-817 are Cytoplasmic-facing; that stretch reads METLSAFLHALRLHWVEFMGKFFNGDGYKFKPFSFALI.

It belongs to the V-ATPase 116 kDa subunit family. In terms of assembly, V-ATPase is a heteromultimeric enzyme composed of a peripheral catalytic V1 complex (components A to H) attached to an integral membrane V0 proton pore complex (components: a, c, c'', d and e).

Its subcellular location is the vacuole membrane. The protein localises to the golgi apparatus. The protein resides in the trans-Golgi network membrane. Essential component of the vacuolar proton pump (V-ATPase), a multimeric enzyme that catalyzes the translocation of protons across the membranes. Required for assembly and activity of the V-ATPase. Required during cell expansion. In Arabidopsis thaliana (Mouse-ear cress), this protein is V-type proton ATPase subunit a1.